The primary structure comprises 212 residues: Large ribosomal subunit protein uL1 (212 aa).

The protein belongs to the universal ribosomal protein uL1 family. As to quaternary structure, part of the 50S ribosomal subunit.

Functionally, binds directly to 23S rRNA. Probably involved in E site tRNA release. In terms of biological role, protein L1 is also a translational repressor protein, it controls the translation of its operon by binding to its mRNA. The sequence is that of Large ribosomal subunit protein uL1 from Haloarcula marismortui (strain ATCC 43049 / DSM 3752 / JCM 8966 / VKM B-1809) (Halobacterium marismortui).